We begin with the raw amino-acid sequence, 693 residues long: Pentatricopeptide repeat-containing protein At2g19280 (693 aa).

PPR repeat units follow at residues 200 to 234 (LETV…GIFP), 235 to 269 (SRGV…GRHL), 270 to 304 (NAAV…GIRP), 305 to 339 (DIVA…GISQ), 340 to 370 (DSVS…FRLR), 372 to 406 (NIFV…GLLP), 407 to 441 (DCVC…GNPP), 442 to 476 (SLTT…GLKL), 477 to 511 (DVVT…GISP), 512 to 546 (DVAT…GFVP), 547 to 581 (STLA…RMKP), 582 to 616 (DVVT…GLKP), and 617 to 651 (DVVL…GMLP).

Belongs to the PPR family. P subfamily.

This Arabidopsis thaliana (Mouse-ear cress) protein is Pentatricopeptide repeat-containing protein At2g19280.